Consider the following 174-residue polypeptide: Small ribosomal subunit protein uS5 (174 aa).

The 64-residue stretch at 16–79 folds into the S5 DRBM domain; sequence FSELIVSVRR…NAARKNMIRV (64 aa).

This sequence belongs to the universal ribosomal protein uS5 family. In terms of assembly, part of the 30S ribosomal subunit. Contacts proteins S4 and S8.

Its function is as follows. With S4 and S12 plays an important role in translational accuracy. Functionally, located at the back of the 30S subunit body where it stabilizes the conformation of the head with respect to the body. This chain is Small ribosomal subunit protein uS5, found in Ehrlichia ruminantium (strain Gardel).